A 198-amino-acid polypeptide reads, in one-letter code: Ribonuclease HII (198 aa).

Residues 14 to 198 (GVIAGVDEVG…RNFAPISRAL (185 aa)) form the RNase H type-2 domain. A divalent metal cation-binding residues include Asp20, Glu21, and Asp112.

Belongs to the RNase HII family. Mn(2+) is required as a cofactor. It depends on Mg(2+) as a cofactor.

It localises to the cytoplasm. It carries out the reaction Endonucleolytic cleavage to 5'-phosphomonoester.. Functionally, endonuclease that specifically degrades the RNA of RNA-DNA hybrids. The polypeptide is Ribonuclease HII (Wolbachia sp. subsp. Drosophila simulans (strain wRi)).